A 477-amino-acid polypeptide reads, in one-letter code: Otolin-1 (477 aa).

An N-terminal signal peptide occupies residues 1-23; that stretch reads MWMFSWLCAILIILAIAGMNTIA. Disordered stretches follow at residues 28-55 and 111-337; these read HTKFTKKSEEREMPKGLKPSSGPPPEEE and QKGE…KGEL. A compositionally biased stretch (basic and acidic residues) spans 33–42; sequence KKSEEREMPK. The Collagen-like 1 domain maps to 116–175; that stretch reads GETGQPGPKGEAGNLGIPGPPGVVGPQGPRGYKGEKGLKGERGDQGVPGYPGKPGAQGEP. Residues proline 133 and proline 136 each carry the hydroxyproline modification. Positions 147–159 are enriched in basic and acidic residues; sequence YKGEKGLKGERGD. Residues proline 163, proline 166, and proline 169 each carry the hydroxyproline modification. Lysine 178 is modified (5-hydroxylysine). O-linked (Gal...) hydroxylysine glycosylation is present at lysine 178. Gly residues predominate over residues 182 to 191; sequence GNIGLGGVKG. An N-linked (GlcNAc...) asparagine glycan is attached at asparagine 202. Collagen-like domains are found at residues 209 to 268 and 278 to 337; these read GDQG…KGSK and GRNG…KGEL. Residue proline 223 is modified to Hydroxyproline. Composition is skewed to basic and acidic residues over residues 226-240 and 247-277; these read KGEKGEMGEKGEMGD and SGERGGKGQKGEGGMKGEKGSKGDSGMEGKS. Proline 283 and proline 301 each carry hydroxyproline. Over residues 298 to 310 the composition is skewed to low complexity; it reads LGPPGLLGPTGPK. The residue at position 310 (lysine 310) is a 5-hydroxylysine. Lysine 310 carries O-linked (Gal...) hydroxylysine glycosylation. The C1q domain maps to 338–473; it reads ARVPRSAFSA…GFLLYPEETS (136 aa). An N-linked (GlcNAc...) asparagine glycan is attached at asparagine 381.

It belongs to the OTOL1 family. In terms of assembly, homooligomer; disulfide-linked; probably forms homotrimers. Interacts with OC90. Interacts with CBLN1.

Its subcellular location is the secreted. The protein localises to the extracellular space. It localises to the extracellular matrix. In terms of biological role, collagen-like protein specifically expressed in the inner ear, which provides an organic scaffold for otoconia, a calcium carbonate structure in the saccule and utricle of the ear. Acts as a scaffold for biomineralization: sequesters calcium and forms interconnecting fibrils between otoconia that are incorporated into the calcium crystal structure. Together with OC90, modulates calcite crystal morphology and growth kinetics. This is Otolin-1 from Homo sapiens (Human).